We begin with the raw amino-acid sequence, 589 residues long: MACSYILTPNPTKLNLSFAPSDLDAPSPSSSVSFTNTKPRRRKLSANSVSDTPNLLNFPNYPSPNPIIPEKDTSRWNPLQRAASAALDFAETALLRRERSKPLPKTVDPRHQISGNYAPVPEQSVKSSLSVDGKIPDCIDGVYLRNGANPLFEPVSGHHLFDGDGMVHAVKITNGDASYSCRFTETERLVQEKQLGSPIFPKAIGELHGHSGIARLMLFYARGLFGLLNHKNGTGVANAGLVYFHDRLLAMSEDDLPYQVRVTDNGDLETIGRFDFDGQLSSAMIAHPKIDPVTKELFALSYDVVKKPYLKYFKFSPEGEKSPDVEIPLASPTMMHDFAITENFVVIPDQQVVFKLSDMFLGKSPVKYDGEKISRFGILPRNAKDASEMVWVESPETFCFHLWNAWESPETDEVVVIGSCMTPADSIFNECDEQLNSVLSEIRLNLKTGKSTRRTIIPGSVQMNLEAGMVNRNLLGRKTRYAYLAIAEPWPKVSGFAKVDLSTGEVKNHFYGGKKYGGEPFFLPRGLESDGEDDGYIMSFVHDEESWESELHIVNAVTLELEATVKLPSRVPYGFHGTFVNSADMLNQA.

The N-terminal 45 residues, 1-45, are a transit peptide targeting the chloroplast; sequence MACSYILTPNPTKLNLSFAPSDLDAPSPSSSVSFTNTKPRRRKLS. A compositionally biased stretch (low complexity) spans 21–34; it reads SDLDAPSPSSSVSF. Positions 21-51 are disordered; it reads SDLDAPSPSSSVSFTNTKPRRRKLSANSVSD. Residues H287, H336, H401, and H576 each contribute to the Fe cation site.

It belongs to the carotenoid oxygenase family. As to quaternary structure, interacts in vitro with VAR3. Requires Fe(2+) as cofactor. Detected only in seeds.

Its subcellular location is the plastid. It localises to the chloroplast thylakoid membrane. It catalyses the reaction a 9-cis-epoxycarotenoid + O2 = a 12'-apo-carotenal + 2-cis,4-trans-xanthoxin. The catalysed reaction is 9-cis-violaxanthin + O2 = (3S,5R,6S)-5,6-epoxy-3-hydroxy-5,6-dihydro-12'-apo-beta-caroten-12'-al + 2-cis,4-trans-xanthoxin. The enzyme catalyses 9'-cis-neoxanthin + O2 = (3S,5R,6R)-3,5-dihydroxy-6,7-didehydro-5,6-dihydro-12'-apo-beta-caroten-12'-al + 2-cis,4-trans-xanthoxin. Functionally, has a 11,12(11',12') 9-cis epoxycarotenoid cleavage activity. Catalyzes the first step of abscisic-acid biosynthesis from carotenoids. The protein is Probable 9-cis-epoxycarotenoid dioxygenase NCED5, chloroplastic (NCED5) of Arabidopsis thaliana (Mouse-ear cress).